The chain runs to 54 residues: ATP synthase protein 8 (54 aa).

Residues 8-28 (WWIINFFIIWTAILLTLVILV) traverse the membrane as a helical segment.

The protein belongs to the ATPase protein 8 family. F-type ATPases have 2 components, CF(1) - the catalytic core - and CF(0) - the membrane proton channel.

Its subcellular location is the mitochondrion membrane. Its function is as follows. Mitochondrial membrane ATP synthase (F(1)F(0) ATP synthase or Complex V) produces ATP from ADP in the presence of a proton gradient across the membrane which is generated by electron transport complexes of the respiratory chain. F-type ATPases consist of two structural domains, F(1) - containing the extramembraneous catalytic core and F(0) - containing the membrane proton channel, linked together by a central stalk and a peripheral stalk. During catalysis, ATP synthesis in the catalytic domain of F(1) is coupled via a rotary mechanism of the central stalk subunits to proton translocation. Part of the complex F(0) domain. Minor subunit located with subunit a in the membrane. The protein is ATP synthase protein 8 (MT-ATP8) of Paracentrotus lividus (Common sea urchin).